The chain runs to 369 residues: Cobalt-precorrin-5B C(1)-methyltransferase (369 aa).

Belongs to the CbiD family.

It catalyses the reaction Co-precorrin-5B + S-adenosyl-L-methionine = Co-precorrin-6A + S-adenosyl-L-homocysteine. It functions in the pathway cofactor biosynthesis; adenosylcobalamin biosynthesis; cob(II)yrinate a,c-diamide from sirohydrochlorin (anaerobic route): step 6/10. Functionally, catalyzes the methylation of C-1 in cobalt-precorrin-5B to form cobalt-precorrin-6A. This Brucella melitensis biotype 1 (strain ATCC 23456 / CCUG 17765 / NCTC 10094 / 16M) protein is Cobalt-precorrin-5B C(1)-methyltransferase.